We begin with the raw amino-acid sequence, 119 residues long: Basic phospholipase A2 homolog 1 (119 aa).

Disulfide bonds link Cys-11–Cys-72, Cys-27–Cys-118, Cys-29–Cys-45, Cys-44–Cys-99, Cys-51–Cys-92, Cys-61–Cys-85, and Cys-79–Cys-90. Residues 107-117 (KENYNIDPKKR) are important for membrane-damaging activities in eukaryotes and bacteria; heparin-binding.

It belongs to the phospholipase A2 family. Group I subfamily. D49 sub-subfamily. Expressed by the venom gland.

The protein resides in the secreted. In Notechis scutatus scutatus (Mainland tiger snake), this protein is Basic phospholipase A2 homolog 1.